We begin with the raw amino-acid sequence, 235 residues long: 5'-methylthioadenosine/S-adenosylhomocysteine nucleosidase (235 aa).

E13 acts as the Proton acceptor in catalysis. Substrate-binding positions include G79, M154, and 175-176 (ME). Catalysis depends on D199, which acts as the Proton donor.

It belongs to the PNP/UDP phosphorylase family. MtnN subfamily.

The catalysed reaction is S-adenosyl-L-homocysteine + H2O = S-(5-deoxy-D-ribos-5-yl)-L-homocysteine + adenine. The enzyme catalyses S-methyl-5'-thioadenosine + H2O = 5-(methylsulfanyl)-D-ribose + adenine. It catalyses the reaction 5'-deoxyadenosine + H2O = 5-deoxy-D-ribose + adenine. It participates in amino-acid biosynthesis; L-methionine biosynthesis via salvage pathway; S-methyl-5-thio-alpha-D-ribose 1-phosphate from S-methyl-5'-thioadenosine (hydrolase route): step 1/2. Catalyzes the irreversible cleavage of the glycosidic bond in both 5'-methylthioadenosine (MTA) and S-adenosylhomocysteine (SAH/AdoHcy) to adenine and the corresponding thioribose, 5'-methylthioribose and S-ribosylhomocysteine, respectively. Also cleaves 5'-deoxyadenosine, a toxic by-product of radical S-adenosylmethionine (SAM) enzymes, into 5-deoxyribose and adenine. The chain is 5'-methylthioadenosine/S-adenosylhomocysteine nucleosidase from Chromohalobacter salexigens (strain ATCC BAA-138 / DSM 3043 / CIP 106854 / NCIMB 13768 / 1H11).